The following is a 369-amino-acid chain: MVWAPLGPPRTDCLTLLHTPSKDSPKMSLEWLVAWSWSLDGLRDCIATGIQSVRDCDTTAVITVACLLVLFVWYCYHVGREQPRPYVSVNSLMQAADANGLQNGYVYCQSPECVRCTHNEGLNQKLYHNLQEYAKRYSWSGMGRIHKGIREQGRYLNSRPSIQKPEVFFLPDLPTTPYFSRDAQKHDVEVLERNFQTILCEFETLYKAFSNCSLPQGWKMNSTPSGEWFTFYLVNQGVCVPRNCRKCPRTYRLLGSLRTCIGNNVFGNACISVLSPGTVITEHYGPTNIRIRCHLGLKTPNGCELVVGGEPQCWAEGRCLLFDDSFLHAAFHEGSAEDGPRVVFMVDLWHPNVAAAERQALDFIFAPGR.

The Cytoplasmic segment spans residues 1 to 58; that stretch reads MVWAPLGPPRTDCLTLLHTPSKDSPKMSLEWLVAWSWSLDGLRDCIATGIQSVRDCDT. Residues 59–79 form a helical membrane-spanning segment; the sequence is TAVITVACLLVLFVWYCYHVG. Over 80–369 the chain is Lumenal; sequence REQPRPYVSV…ALDFIFAPGR (290 aa). The N-linked (GlcNAc...) asparagine glycan is linked to asparagine 211. Tryptophan 228 and serine 272 together coordinate 2-oxoglutarate. Histidine 283 serves as a coordination point for Fe cation. 2-oxoglutarate is bound at residue 292–294; that stretch reads RCH. Histidine 328 is a binding site for Fe cation. Arginine 341 serves as a coordination point for 2-oxoglutarate.

It belongs to the aspartyl/asparaginyl beta-hydroxylase family. Fe cation serves as cofactor.

The protein localises to the membrane. In terms of biological role, may function as 2-oxoglutarate-dependent dioxygenase. This chain is Aspartate beta-hydroxylase domain-containing protein 2 (ASPHD2), found in Homo sapiens (Human).